A 245-amino-acid polypeptide reads, in one-letter code: Rhamnosyl O-methyltransferase (245 aa).

Residues 1–38 (MGLVWRSRTSLVGQLIGLVRLVASFAAQLFYRPSDAVA) form the signal peptide.

It belongs to the rhamnosyl O-methyltransferase family.

Its function is as follows. Catalyzes the O-methylation of the hydroxyl group located on C-2 of the first rhamnosyl residue linked to the phenolic group of glycosylated phenolphthiocerol dimycocerosates (PGL) and p-hydroxybenzoic acid derivatives (p-HBAD). In Mycobacterium bovis (strain ATCC BAA-935 / AF2122/97), this protein is Rhamnosyl O-methyltransferase.